A 369-amino-acid chain; its full sequence is Hsc70-interacting protein (369 aa).

The segment at 38–97 is disordered; it reads MGGKVPPATQKAKSEENTKEEKPDSKKVEEDLKADEPSSEESDLEIDKEGVIEPDTDAPQ. Positions 49–73 are enriched in basic and acidic residues; it reads AKSEENTKEEKPDSKKVEEDLKADE. 3 TPR repeats span residues 114-147, 148-181, and 182-215; these read ANDK…NPRL, AILY…NPDS, and AQPY…DYDE. The span at 256–272 shows a compositional bias: basic and acidic residues; that stretch reads KAREEHERAQREEEARR. The interval 256 to 300 is disordered; that stretch reads KAREEHERAQREEEARRQSGAQYGSFPGGFPGGMPGNFPGGMPGM. Residues 281-300 are compositionally biased toward gly residues; it reads FPGGFPGGMPGNFPGGMPGM. The 40-residue stretch at 319–358 folds into the STI1 domain; it reads DPEVLAAMQDPEVMVAFQDVAQNPANMSKYQSNPKVMNLI. Phosphoserine; by GRK5 is present on S346. N6-acetyllysine is present on residues K353 and K360.

The protein belongs to the FAM10 family. As to quaternary structure, homotetramer. Interacts with HSC70 as well as DNAJ homologs and HSP90. Interacts (via the C-terminus 303- 319 AA) with GRK5.

The protein localises to the cytoplasm. Its function is as follows. One HIP oligomer binds the ATPase domains of at least two HSC70 molecules dependent on activation of the HSC70 ATPase by HSP40. Stabilizes the ADP state of HSC70 that has a high affinity for substrate protein. Through its own chaperone activity, it may contribute to the interaction of HSC70 with various target proteins. This Homo sapiens (Human) protein is Hsc70-interacting protein (ST13).